We begin with the raw amino-acid sequence, 254 residues long: Probable membrane transporter protein YjnA (254 aa).

Helical transmembrane passes span 5–25 (IILM…GGAA), 75–95 (AIGS…FPAF), 105–125 (HALG…LFLD), 143–163 (ALTI…SIGS), 187–207 (IAHA…FGSV), and 209–229 (YMLA…GSHL).

The protein belongs to the 4-toluene sulfonate uptake permease (TSUP) (TC 2.A.102) family.

The protein localises to the cell membrane. The chain is Probable membrane transporter protein YjnA (yjnA) from Bacillus subtilis (strain 168).